A 119-amino-acid polypeptide reads, in one-letter code: Large ribosomal subunit protein bL20c (119 aa).

This sequence belongs to the bacterial ribosomal protein bL20 family.

Its subcellular location is the plastid. The protein localises to the chloroplast. Its function is as follows. Binds directly to 23S ribosomal RNA and is necessary for the in vitro assembly process of the 50S ribosomal subunit. It is not involved in the protein synthesizing functions of that subunit. The polypeptide is Large ribosomal subunit protein bL20c (rpl20) (Pinus thunbergii (Japanese black pine)).